The following is a 323-amino-acid chain: Transcription factor JunD (323 aa).

2 disordered regions span residues 138 to 173 (QNQL…APGL) and 197 to 221 (PFAA…QIVP). Positions 141-167 (LGGGGGPNGGAAAAGGGGGGGGGGGGE) are enriched in gly residues. A compositionally biased stretch (pro residues) spans 198–212 (FAAPPPRLPPPPPPP). Residues 242-269 (RIKAERKRLRNRIAASKCRKRKLERISR) form a basic motif region. One can recognise a bZIP domain in the interval 242 to 305 (RIKAERKRLR…AQLKQKVLSH (64 aa)). Residues 270–298 (LEEKVKSLKSQNTELASTASLLREQVAQL) are leucine-zipper.

Belongs to the bZIP family. Jun subfamily. As to quaternary structure, binds DNA as a dimer.

It localises to the nucleus. The sequence is that of Transcription factor JunD (JUND) from Gallus gallus (Chicken).